Consider the following 78-residue polypeptide: Large ribosomal subunit protein bL28 (78 aa).

The protein belongs to the bacterial ribosomal protein bL28 family.

The chain is Large ribosomal subunit protein bL28 from Nostoc sp. (strain PCC 7120 / SAG 25.82 / UTEX 2576).